Consider the following 65-residue polypeptide: Large ribosomal subunit protein uL29c (65 aa).

Belongs to the universal ribosomal protein uL29 family.

The protein resides in the plastid. It localises to the chloroplast. This Guillardia theta (Cryptophyte) protein is Large ribosomal subunit protein uL29c (rpl29).